A 434-amino-acid chain; its full sequence is Nicotinate phosphoribosyltransferase (434 aa).

The residue at position 242 (H242) is a Phosphohistidine; by autocatalysis.

This sequence belongs to the NAPRTase family. In terms of processing, transiently phosphorylated on a His residue during the reaction cycle. Phosphorylation strongly increases the affinity for substrates and increases the rate of nicotinate D-ribonucleotide production. Dephosphorylation regenerates the low-affinity form of the enzyme, leading to product release.

It catalyses the reaction nicotinate + 5-phospho-alpha-D-ribose 1-diphosphate + ATP + H2O = nicotinate beta-D-ribonucleotide + ADP + phosphate + diphosphate. The protein operates within cofactor biosynthesis; NAD(+) biosynthesis; nicotinate D-ribonucleotide from nicotinate: step 1/1. Catalyzes the synthesis of beta-nicotinate D-ribonucleotide from nicotinate and 5-phospho-D-ribose 1-phosphate at the expense of ATP. This chain is Nicotinate phosphoribosyltransferase, found in Rhizobium rhizogenes (strain K84 / ATCC BAA-868) (Agrobacterium radiobacter).